A 175-amino-acid chain; its full sequence is 6,7-dimethyl-8-ribityllumazine synthase (175 aa).

Residues F24, 58–60 (ALE), and 82–84 (AVI) each bind 5-amino-6-(D-ribitylamino)uracil. 87 to 88 (ET) serves as a coordination point for (2S)-2-hydroxy-3-oxobutyl phosphate. The active-site Proton donor is H90. N115 contacts 5-amino-6-(D-ribitylamino)uracil. A (2S)-2-hydroxy-3-oxobutyl phosphate-binding site is contributed by R129. The disordered stretch occupies residues 150 to 175 (ALEPEEDDEDEDDEDEDFDDEEDDGR). Residues 152–175 (EPEEDDEDEDDEDEDFDDEEDDGR) are compositionally biased toward acidic residues.

It belongs to the DMRL synthase family.

The catalysed reaction is (2S)-2-hydroxy-3-oxobutyl phosphate + 5-amino-6-(D-ribitylamino)uracil = 6,7-dimethyl-8-(1-D-ribityl)lumazine + phosphate + 2 H2O + H(+). It functions in the pathway cofactor biosynthesis; riboflavin biosynthesis; riboflavin from 2-hydroxy-3-oxobutyl phosphate and 5-amino-6-(D-ribitylamino)uracil: step 1/2. Its function is as follows. Catalyzes the formation of 6,7-dimethyl-8-ribityllumazine by condensation of 5-amino-6-(D-ribitylamino)uracil with 3,4-dihydroxy-2-butanone 4-phosphate. This is the penultimate step in the biosynthesis of riboflavin. This is 6,7-dimethyl-8-ribityllumazine synthase from Bordetella bronchiseptica (strain ATCC BAA-588 / NCTC 13252 / RB50) (Alcaligenes bronchisepticus).